We begin with the raw amino-acid sequence, 74 residues long: MNPGFDAVDQETAAAQAVADAHGVPFLGIRGMSDGPGDPLHLPGFPVQFFVYKQIAANNAARVTEAFLQNWAGV.

An N-terminal signal peptide occupies residues methionine 1 to alanine 19.

This is an uncharacterized protein from Mycobacterium tuberculosis (strain ATCC 25618 / H37Rv).